Here is a 141-residue protein sequence, read N- to C-terminus: uncharacterized protein (141 aa).

Transmembrane regions (helical) follow at residues 64-84 and 112-132; these read IAAVGLAVSGPGVLYKVIEAI and IVGSGAAFVTALGVAAFLVLI.

Its subcellular location is the cell membrane. This is an uncharacterized protein from Sinorhizobium fredii (strain NBRC 101917 / NGR234).